The chain runs to 414 residues: Serine hydroxymethyltransferase (414 aa).

(6S)-5,6,7,8-tetrahydrofolate contacts are provided by residues L116 and 120 to 122 (GHL). K224 is subject to N6-(pyridoxal phosphate)lysine. 348–350 (SPF) is a binding site for (6S)-5,6,7,8-tetrahydrofolate.

The protein belongs to the SHMT family. In terms of assembly, homodimer. Pyridoxal 5'-phosphate is required as a cofactor.

It is found in the cytoplasm. The catalysed reaction is (6R)-5,10-methylene-5,6,7,8-tetrahydrofolate + glycine + H2O = (6S)-5,6,7,8-tetrahydrofolate + L-serine. The protein operates within one-carbon metabolism; tetrahydrofolate interconversion. It functions in the pathway amino-acid biosynthesis; glycine biosynthesis; glycine from L-serine: step 1/1. Functionally, catalyzes the reversible interconversion of serine and glycine with tetrahydrofolate (THF) serving as the one-carbon carrier. This reaction serves as the major source of one-carbon groups required for the biosynthesis of purines, thymidylate, methionine, and other important biomolecules. Also exhibits THF-independent aldolase activity toward beta-hydroxyamino acids, producing glycine and aldehydes, via a retro-aldol mechanism. The sequence is that of Serine hydroxymethyltransferase from Campylobacter jejuni subsp. doylei (strain ATCC BAA-1458 / RM4099 / 269.97).